The chain runs to 634 residues: DNA-directed RNA polymerase subunit gamma (634 aa).

Zn(2+)-binding residues include Cys-74, Cys-76, Cys-89, and Cys-92. Asp-471, Asp-473, and Asp-475 together coordinate Mg(2+).

It belongs to the RNA polymerase beta' chain family. RpoC1 subfamily. As to quaternary structure, in cyanobacteria the RNAP catalytic core is composed of 2 alpha, 1 beta, 1 beta', 1 gamma and 1 omega subunit. When a sigma factor is associated with the core the holoenzyme is formed, which can initiate transcription. Requires Mg(2+) as cofactor. Zn(2+) is required as a cofactor.

The catalysed reaction is RNA(n) + a ribonucleoside 5'-triphosphate = RNA(n+1) + diphosphate. Its function is as follows. DNA-dependent RNA polymerase catalyzes the transcription of DNA into RNA using the four ribonucleoside triphosphates as substrates. In Parasynechococcus marenigrum (strain WH8102), this protein is DNA-directed RNA polymerase subunit gamma.